Here is a 279-residue protein sequence, read N- to C-terminus: Protein NipSnap homolog 1 (279 aa).

Belongs to the NipSnap family.

It localises to the mitochondrion matrix. Its function is as follows. Protein involved in mitophagy. Accumulates on the mitochondria surface in response to mitochondrial depolarization and acts as a 'eat me' signal by recruiting proteins involved in selective autophagy. This is Protein NipSnap homolog 1 from Danio rerio (Zebrafish).